The following is a 494-amino-acid chain: DUF21 domain-containing protein At4g14240 (494 aa).

The Extracellular portion of the chain corresponds to 1-43 (MHLINAVAAARILSGIGQSNGNNGGEAIPFGSFEWITYAGISC). Residues 31–213 (GSFEWITYAG…GKGGELTHDE (183 aa)) enclose the CNNM transmembrane domain. The chain crosses the membrane as a helical span at residues 44–64 (FLVLFAGIMSGLTLGLMSLGL). Residues 65-93 (VELEILQRSGTPNEKKQAAAIFPVVQKQH) are Cytoplasmic-facing. The helical transmembrane segment at 94 to 114 (QLLVTLLLCNAMAMEGLPIYL) threads the bilayer. Topologically, residues 115 to 121 (DKLFNEY) are extracellular. Residues 122-142 (VAIILSVTFVLAFGEVIPQAI) traverse the membrane as a helical segment. The Cytoplasmic segment spans residues 143–159 (CTRYGLAVGANFVWLVR). The chain crosses the membrane as a helical span at residues 160–180 (ILMTLCYPIAFPIGKILDLVL). The Extracellular portion of the chain corresponds to 181-494 (GHNDALFRRA…TITEPIRRNN (314 aa)). CBS domains lie at 232–292 (MTPI…TETL), 297–352 (CIRR…SNDS), and 364–425 (GNHD…IVDE). N-linked (GlcNAc...) asparagine glycosylation is found at Asn-350 and Asn-385. The segment at 459–494 (QKGTGGQNKQGQTNKVPGQEQDKMLGTITEPIRRNN) is disordered.

The protein resides in the membrane. This chain is DUF21 domain-containing protein At4g14240 (CBSDUF1), found in Arabidopsis thaliana (Mouse-ear cress).